Reading from the N-terminus, the 509-residue chain is MFS transporter fsdG (509 aa).

N-linked (GlcNAc...) asparagine glycans are attached at residues asparagine 8 and asparagine 26. The next 4 helical transmembrane spans lie at 63 to 83 (FLIHTILVSMLCLAGNLATTM), 103 to 123 (IALTVSIYLLGFALAPMVTSP), 139 to 159 (IFFLGFNLACAFSSNIGMFIA), and 162 to 182 (FLAGCAGSAPMTVGGGTIADF). N-linked (GlcNAc...) asparagine glycosylation occurs at asparagine 189. Helical transmembrane passes span 195 to 215 (LFALGPLLGPVIGPIVGGFVA), 222 to 242 (WTFRIMSIVIAVLSILSCIFL), 298 to 318 (LIFLPQVLILSFYTAFVFGLI), and 341 to 361 (GLSYIGIGFGMVGALFLFNFI). Residue asparagine 367 is glycosylated (N-linked (GlcNAc...) asparagine). 4 helical membrane passes run 380-400 (YLPLMTWFSPLLPIGFFWYGW), 408-428 (WVVPILGTFFVGFGSFAIIMP), 442-462 (AASVLAASNMMRYVFAAFLPL), and 474-494 (GWGNSLLGFLCVVLAPVPAIF).

This sequence belongs to the major facilitator superfamily.

It is found in the cell membrane. Its function is as follows. Efflux pump that might be required for efficient secretion of fusaridione A or other secondary metabolies produced by the fusaridione A gene cluster. The polypeptide is MFS transporter fsdG (Fusarium heterosporum).